The chain runs to 502 residues: Mannitol 2-dehydrogenase (502 aa).

37 to 48 (IVHIGVGGFHRA) contacts NAD(+).

It belongs to the mannitol dehydrogenase family. Monomer.

The enzyme catalyses D-mannitol + NAD(+) = D-fructose + NADH + H(+). Catalyzes the NAD(H)-dependent interconversion of D-fructose and D-mannitol in the mannitol metabolic pathway. The polypeptide is Mannitol 2-dehydrogenase (Aspergillus clavatus (strain ATCC 1007 / CBS 513.65 / DSM 816 / NCTC 3887 / NRRL 1 / QM 1276 / 107)).